Here is a 100-residue protein sequence, read N- to C-terminus: UPF0251 protein VV2_0946 (100 aa).

Belongs to the UPF0251 family.

This chain is UPF0251 protein VV2_0946, found in Vibrio vulnificus (strain CMCP6).